Here is a 238-residue protein sequence, read N- to C-terminus: Ribosome-recycling factor, mitochondrial (238 aa).

It belongs to the RRF family.

The protein localises to the mitochondrion. Its function is as follows. Responsible for the release of ribosomes from messenger RNA at the termination of protein biosynthesis. May increase the efficiency of translation by recycling ribosomes from one round of translation to another. This chain is Ribosome-recycling factor, mitochondrial, found in Caenorhabditis elegans.